Reading from the N-terminus, the 170-residue chain is Cathelicidin antimicrobial peptide (170 aa).

A signal peptide spans 1–30 (MKTQRDGHSLGWWSLVLLLLGLVMPLAIIA). A propeptide spans 31 to 131 (QVLSYKEAVL…DISCDKDNKR (101 aa)) (cathelin-like domain (CLD)). 2 cysteine pairs are disulfide-bonded: Cys-86–Cys-97 and Cys-108–Cys-125. Positions 150 to 162 (SKRIVQRIKDFLR) are active core.

The protein belongs to the cathelicidin family. Monomer, homodimer or homotrimer (in vitro). Oligomerizes as tetra- or hexamer in solution (in vitro). In terms of processing, proteolytically cleaved by proteinase PRTN3 into antibacterial peptide LL-37. Proteolytically cleaved by cathepsin CTSG and neutrophil elastase ELANE. Resistant to proteolytic degradation in solution, and when bound to both zwitterionic (mimicking mammalian membranes) and negatively charged membranes (mimicking bacterial membranes). Post-translationally, after secretion onto the skin surface, the CAMP gene product is processed by a serine protease-dependent mechanism into multiple novel antimicrobial peptides distinct from and shorter than cathelicidin LL-37. These peptides show enhanced antimicrobial action, acquiring the ability to kill skin pathogens such as S.aureus, E.coli and C.albicans. These peptides have lost the ability to stimulate CXCL8/IL8 release from keratinocytes. The peptides act synergistically, killing bacteria at lower concentrations when present together, and maintain activity at increased salt condition.

Its subcellular location is the secreted. It localises to the vesicle. Antimicrobial protein that is an integral component of the innate immune system. Binds to bacterial lipopolysaccharides (LPS). Acts via neutrophil N-formyl peptide receptors to enhance the release of CXCL2. Postsecretory processing generates multiple cathelicidin antimicrobial peptides with various lengths which act as a topical antimicrobial defense in sweat on skin. The unprocessed precursor form, cathelicidin antimicrobial peptide, inhibits the growth of Gram-negative E.coli and E.aerogenes with efficiencies comparable to that of the mature peptide LL-37 (in vitro). In terms of biological role, antimicrobial peptide that is an integral component of the innate immune system. Binds to bacterial lipopolysaccharides (LPS). Causes membrane permeabilization by forming transmembrane pores (in vitro). Causes lysis of E.coli. Exhibits antimicrobial activity against Gram-negative bacteria such as P.aeruginosa, S.typhimurium, E.aerogenes, E.coli and P.syringae, Gram-positive bacteria such as L.monocytogenes, S.epidermidis, S.pyogenes and S.aureus, as well as vancomycin-resistant enterococci (in vitro). Exhibits antimicrobial activity against methicillin-resistant S.aureus, P.mirabilis, and C.albicans in low-salt media, but not in media containing 100 mM NaCl (in vitro). Forms chiral supramolecular assemblies with quinolone signal (PQS) molecules of P.aeruginosa, which may lead to interference of bacterial quorum signaling and perturbance of bacterial biofilm formation. May form supramolecular fiber-like assemblies on bacterial membranes. Induces cytokine and chemokine producation as well as TNF/TNFA and CSF2/GMCSF production in normal human keratinocytes. Exhibits hemolytic activity against red blood cells. Its function is as follows. Exhibits antimicrobial activity against E.coli and B.megaterium (in vitro). The chain is Cathelicidin antimicrobial peptide from Gorilla gorilla gorilla (Western lowland gorilla).